Consider the following 389-residue polypeptide: (S)-8-oxocitronellyl enol synthase CYC1 (389 aa).

Residues 34-36, 62-63, 80-81, 104-105, and Gln138 each bind NADP(+); these read TGI, RR, DV, and AW. Residues Lys142 and Tyr174 contribute to the active site. Substrate contacts are provided by Lys142 and Tyr174. NADP(+)-binding positions include Tyr174, Val201, and 208 to 210; that span reads SMM. Ser350 contacts substrate.

The protein belongs to the short-chain dehydrogenases/reductases (SDR) family. Highly divergent.

It catalyses the reaction (S)-8-oxocitronellyl enol + NADP(+) = (6E)-8-oxogeranial + NADPH + H(+). The catalysed reaction is (S)-8-oxocitronellyl enol + NAD(+) = (6E)-8-oxogeranial + NADH + H(+). Functionally, iridoid synthase that catalyzes the first step in generation of the iridoid ring scaffold using the linear monoterpene (6E)-8-oxogeranial as substrate. Iridoids comprise a large family of distinctive bicyclic monoterpenes that possess a wide range of pharmacological activities, including anticancer, anti-inflammatory, antifungal and antibacterial activities. In Camptotheca acuminata (Happy tree), this protein is (S)-8-oxocitronellyl enol synthase CYC1.